The primary structure comprises 326 residues: Siroheme decarboxylase NirDL subunit (326 aa).

This sequence belongs to the Ahb/Nir family. As to quaternary structure, forms a complex composed of NirDL, NirG and NirH. All proteins are required for the total conversion of siroheme to didecarboxysiroheme.

The enzyme catalyses siroheme + 2 H(+) = 12,18-didecarboxysiroheme + 2 CO2. Its pathway is porphyrin-containing compound metabolism. In terms of biological role, involved in heme d1 biosynthesis. Catalyzes the decarboxylation of siroheme into didecarboxysiroheme. Siroheme is probably decarboxylated to monodecarboxysiroheme, which is in turn decarboxylated to didecarboxysiroheme. This is Siroheme decarboxylase NirDL subunit from Paracoccus pantotrophus (Thiosphaera pantotropha).